We begin with the raw amino-acid sequence, 367 residues long: Alanine racemase (367 aa).

Lys-40 functions as the Proton acceptor; specific for D-alanine in the catalytic mechanism. An N6-(pyridoxal phosphate)lysine modification is found at Lys-40. Residue Arg-136 participates in substrate binding. Tyr-263 serves as the catalytic Proton acceptor; specific for L-alanine. Met-310 is a binding site for substrate.

It belongs to the alanine racemase family. Pyridoxal 5'-phosphate serves as cofactor.

The catalysed reaction is L-alanine = D-alanine. It participates in amino-acid biosynthesis; D-alanine biosynthesis; D-alanine from L-alanine: step 1/1. Catalyzes the interconversion of L-alanine and D-alanine. May also act on other amino acids. The polypeptide is Alanine racemase (alr) (Streptococcus suis (strain 98HAH33)).